The primary structure comprises 156 residues: Small ribosomal subunit protein uS7 (156 aa).

The protein belongs to the universal ribosomal protein uS7 family. In terms of assembly, part of the 30S ribosomal subunit. Contacts proteins S9 and S11.

One of the primary rRNA binding proteins, it binds directly to 16S rRNA where it nucleates assembly of the head domain of the 30S subunit. Is located at the subunit interface close to the decoding center, probably blocks exit of the E-site tRNA. This is Small ribosomal subunit protein uS7 from Macrococcus caseolyticus (strain JCSC5402) (Macrococcoides caseolyticum).